Consider the following 369-residue polypeptide: Histidinol-phosphate aminotransferase (369 aa).

Position 222 is an N6-(pyridoxal phosphate)lysine (Lys-222).

This sequence belongs to the class-II pyridoxal-phosphate-dependent aminotransferase family. Histidinol-phosphate aminotransferase subfamily. Homodimer. Pyridoxal 5'-phosphate serves as cofactor.

It catalyses the reaction L-histidinol phosphate + 2-oxoglutarate = 3-(imidazol-4-yl)-2-oxopropyl phosphate + L-glutamate. Its pathway is amino-acid biosynthesis; L-histidine biosynthesis; L-histidine from 5-phospho-alpha-D-ribose 1-diphosphate: step 7/9. The polypeptide is Histidinol-phosphate aminotransferase (Halalkalibacterium halodurans (strain ATCC BAA-125 / DSM 18197 / FERM 7344 / JCM 9153 / C-125) (Bacillus halodurans)).